Reading from the N-terminus, the 353-residue chain is MAIDENKQKALAAALGQIEKQFGKGSIMRLGEDRSMDVETISTGSLSLDIALGAGGLPMGRIVEIYGPESSGKTTLTLQVIAAAQREGKTCAFIDAEHALDPVYARKLGVDIDNLLCSQPDTGEQALEICDALARSGAVDVIVVDSVAALTPKAEIEGEIGDSHMGLAARMMSQAMRKLAGNLKQSNTLLIFINQIRMKIGVMFGNPETTTGGNALKFYASVRLDIRRIGAVKEGDNVVGSETRVKVVKNKIAAPFKQAEFQILYGEGINFYGELVDLGVKEKLIEKAGAWYSYNGEKIGQGKANATTWLKENPATAKEIEKRVRELLLSNQNATPDFAVDDSEGVAETNEDF.

67–74 (GPESSGKT) lines the ATP pocket.

The protein belongs to the RecA family.

Its subcellular location is the cytoplasm. Its function is as follows. Can catalyze the hydrolysis of ATP in the presence of single-stranded DNA, the ATP-dependent uptake of single-stranded DNA by duplex DNA, and the ATP-dependent hybridization of homologous single-stranded DNAs. It interacts with LexA causing its activation and leading to its autocatalytic cleavage. This chain is Protein RecA, found in Salmonella agona (strain SL483).